Here is a 486-residue protein sequence, read N- to C-terminus: Serine/threonine-protein phosphatase 2A 56 kDa regulatory subunit alpha isoform (486 aa).

Residues 1-18 (MSSSSPPAGAASAAISAS) are compositionally biased toward low complexity. A disordered region spans residues 1–52 (MSSSSPPAGAASAAISASEKVDGFTRKSVRKAQRQKRSQGSSQFRSQGSQAE). S2 carries the N-acetylserine modification. Over residues 27–37 (KSVRKAQRQKR) the composition is skewed to basic residues. Residues 38 to 51 (SQGSSQFRSQGSQA) show a composition bias toward low complexity. Phosphoserine is present on residues S41, S42, and S49.

Belongs to the phosphatase 2A regulatory subunit B56 family. As to quaternary structure, PP2A consists of a common heterodimeric core enzyme, composed of a 36 kDa catalytic subunit (subunit C) and a 65 kDa constant regulatory subunit (PR65 or subunit A), that associates with a variety of regulatory subunits. Proteins that associate with the core dimer include three families of regulatory subunits B (the R2/B/PR55/B55, R3/B''/PR72/PR130/PR59 and R5/B'/B56 families), the 48 kDa variable regulatory subunit, viral proteins, and cell signaling molecules. Interacts with SGO1. In terms of processing, phosphorylated on serine residues. Widely expressed with the highest expression in heart and skeletal muscle.

It is found in the cytoplasm. Its subcellular location is the nucleus. The protein localises to the chromosome. It localises to the centromere. Functionally, the B regulatory subunit might modulate substrate selectivity and catalytic activity, and might also direct the localization of the catalytic enzyme to a particular subcellular compartment. The protein is Serine/threonine-protein phosphatase 2A 56 kDa regulatory subunit alpha isoform (PPP2R5A) of Homo sapiens (Human).